The primary structure comprises 130 residues: Large ribosomal subunit protein uL14 (130 aa).

Belongs to the universal ribosomal protein uL14 family. Part of the 50S ribosomal subunit. Forms a cluster with proteins L3 and L19. In the 70S ribosome, L14 and L19 interact and together make contacts with the 16S rRNA in bridges B5 and B8.

In terms of biological role, binds to 23S rRNA. Forms part of two intersubunit bridges in the 70S ribosome. This chain is Large ribosomal subunit protein uL14, found in Helicobacter pylori (strain P12).